We begin with the raw amino-acid sequence, 258 residues long: Thiazole synthase (258 aa).

Lysine 98 functions as the Schiff-base intermediate with DXP in the catalytic mechanism. Residues glycine 159, 185 to 186, and 207 to 208 each bind 1-deoxy-D-xylulose 5-phosphate; these read AG and NT.

It belongs to the ThiG family. Homotetramer. Forms heterodimers with either ThiH or ThiS.

It is found in the cytoplasm. It catalyses the reaction [ThiS sulfur-carrier protein]-C-terminal-Gly-aminoethanethioate + 2-iminoacetate + 1-deoxy-D-xylulose 5-phosphate = [ThiS sulfur-carrier protein]-C-terminal Gly-Gly + 2-[(2R,5Z)-2-carboxy-4-methylthiazol-5(2H)-ylidene]ethyl phosphate + 2 H2O + H(+). Its pathway is cofactor biosynthesis; thiamine diphosphate biosynthesis. Functionally, catalyzes the rearrangement of 1-deoxy-D-xylulose 5-phosphate (DXP) to produce the thiazole phosphate moiety of thiamine. Sulfur is provided by the thiocarboxylate moiety of the carrier protein ThiS. In vitro, sulfur can be provided by H(2)S. The protein is Thiazole synthase of Cytophaga hutchinsonii (strain ATCC 33406 / DSM 1761 / CIP 103989 / NBRC 15051 / NCIMB 9469 / D465).